The chain runs to 307 residues: Zinc transporter ZIP9 (307 aa).

Residues 4 to 24 form a helical membrane-spanning segment; the sequence is FISISLLSLAMLVGCYVAGII. A glycan (N-linked (GlcNAc...) asparagine) is linked at N29. 5 helical membrane-spanning segments follow: residues 35–55, 106–126, 146–166, 176–196, and 210–230; these read LKLV…AVIV, AYIG…DQIG, ITTT…LGAA, LIVF…LVSF, and HLLV…LGLS. A glycan (N-linked (GlcNAc...) asparagine) is linked at N241. 2 helical membrane passes run 244 to 264 and 286 to 306; these read GVAM…HVLP and LEVA…VGHQ.

Belongs to the ZIP transporter (TC 2.A.5) family. As to expression, highly expressed in pancreas, testis, and pituitary and moderately in the kidney, liver, uterus, heart, prostate, and brain, whereas expression is lower in the ovary and colon.

The protein resides in the golgi apparatus. It is found in the trans-Golgi network membrane. It localises to the cell membrane. Its subcellular location is the cytoplasm. The protein localises to the perinuclear region. The protein resides in the mitochondrion. It is found in the nucleus. It carries out the reaction Zn(2+)(in) = Zn(2+)(out). Transports zinc ions across cell and organelle membranes into the cytoplasm and regulates intracellular zinc homeostasis. Participates in the zinc ions efflux out of the secretory compartments. Regulates intracellular zinc level, resulting in the enhancement of AKT1 and MAPK3/MAPK1 (Erk1/2) phosphorylation in response to the BCR activation. Also functions as a membrane androgen receptor that mediates, through a G protein, the non-classical androgen signaling pathway, characterized by the activation of MAPK3/MAPK1 (Erk1/2) and transcription factors CREB1 or ATF1. This pathway contributes to CLDN1 and CLDN5 expression and tight junction formation between adjacent Sertoli cells. Mediates androgen-induced vascular endothelial cell proliferation through activation of an inhibitory G protein leading to the AKT1 and MAPK3/MAPK1 (Erk1/2) activation which in turn modulate inhibition (phosphorylation) of GSK3B and CCND1 transcription. Moreover, has dual functions as a membrane-bound androgen receptor and as an androgen-dependent zinc transporter both of which are mediated through an inhibitory G protein (Gi) that mediates both MAP kinase and zinc signaling leading to the androgen-dependent apoptotic process. This chain is Zinc transporter ZIP9, found in Homo sapiens (Human).